We begin with the raw amino-acid sequence, 444 residues long: Alpha-1,3-mannosyl-glycoprotein 2-beta-N-acetylglucosaminyltransferase (444 aa).

Topologically, residues 1 to 6 are cytoplasmic; that stretch reads MARISC. A helical; Signal-anchor for type II membrane protein transmembrane segment spans residues 7 to 24; the sequence is DLRFLLIPAAFMFIYIQM. Topologically, residues 25–444 are lumenal; that stretch reads RLFQTQSQYA…SVMQLGIRNS (420 aa). Positions 61–92 form a coiled coil; it reads KQSRIVALEDMKNRQDEELVQLKDLIQTFEKK. Substrate is bound by residues Arg-115, Asp-144, His-188, and Asp-210. Asp-211 is a Mn(2+) binding site. Asp-287 serves as the catalytic Proton acceptor. Ser-318 provides a ligand contact to substrate. Asn-351 carries N-linked (GlcNAc...) asparagine glycosylation.

It belongs to the glycosyltransferase 13 family. Mn(2+) is required as a cofactor. Glycosylated. Expressed in roots, stems, leaves and flowers.

Its subcellular location is the golgi apparatus membrane. It catalyses the reaction N(4)-(alpha-D-Man-(1-&gt;3)-[alpha-D-Man-(1-&gt;3)-[alpha-D-Man-(1-&gt;6)]-alpha-D-Man-(1-&gt;6)]-beta-D-Man-(1-&gt;4)-beta-D-GlcNAc-(1-&gt;4)-beta-D-GlcNAc)-L-asparaginyl-[protein] (N-glucan mannose isomer 5A1,2) + UDP-N-acetyl-alpha-D-glucosamine = N(4)-{beta-D-GlcNAc-(1-&gt;2)-alpha-D-Man-(1-&gt;3)-[alpha-D-Man-(1-&gt;3)-[alpha-D-Man-(1-&gt;6)]-alpha-D-Man-(1-&gt;6)]-beta-D-Man-(1-&gt;4)-beta-D-GlcNAc-(1-&gt;4)-beta-D-GlcNAc}-L-asparaginyl-[protein] + UDP + H(+). It functions in the pathway protein modification; protein glycosylation. In terms of biological role, initiates complex N-linked carbohydrate formation. Essential for the conversion of high-mannose to hybrid and complex N-glycans. Required for normal root growth and morphology. This Arabidopsis thaliana (Mouse-ear cress) protein is Alpha-1,3-mannosyl-glycoprotein 2-beta-N-acetylglucosaminyltransferase.